The following is a 164-amino-acid chain: Cell division protein SepF (164 aa).

The segment at 21–71 (YQQGQQPAQQQQSPVQAVPTPVPAPQQQAKRAPVTPLHKPSTTTRNAAPAE) is disordered. Residues 22-49 (QQGQQPAQQQQSPVQAVPTPVPAPQQQA) show a composition bias toward low complexity.

The protein belongs to the SepF family. As to quaternary structure, homodimer. Interacts with FtsZ.

Its subcellular location is the cytoplasm. Cell division protein that is part of the divisome complex and is recruited early to the Z-ring. Probably stimulates Z-ring formation, perhaps through the cross-linking of FtsZ protofilaments. Its function overlaps with FtsA. This is Cell division protein SepF from Clavibacter sepedonicus (Clavibacter michiganensis subsp. sepedonicus).